The chain runs to 417 residues: MLKRDMNIADYDPELWASIVEETQRQEEHIELIASENYTSPRVMQAQGSQLTNKYAEGYPGKRYYGGCEFVDKTETLAIERAKALFGAVYANVQPHSGSQANAAVYMALLKPGDTVLGMNLAHGGHLTHGSPVNFSGKLYNIVPYGIDASGKIDYVELERLALEHKPKMVLGGFSAYSGVVDWAKMREIADKVGAYLFVDMAHVAGLVAAGVYPNPVPHAHVVTSTTHKTLAGPRGGLILSAVNDEELHKKLNSAVFPGTQGGPLMHVIAGKAVAFKEAMEPEFKAYQQQVVKNSKAMVEVFLARGYKIVSGGTENHLFLVDFTDRELTGKEADAALGLANITVNKNSVPNDPRSPFVTSGIRIGSPSITRRGFKEAEAKELAGWICDVLDNRTDEAVIAATRAKVLDICKRLPVYA.

(6S)-5,6,7,8-tetrahydrofolate is bound by residues Leu121 and 125 to 127 (GHL). Position 229 is an N6-(pyridoxal phosphate)lysine (Lys229). (6S)-5,6,7,8-tetrahydrofolate is bound at residue 355–357 (SPF).

Belongs to the SHMT family. Homodimer. It depends on pyridoxal 5'-phosphate as a cofactor.

The protein resides in the cytoplasm. It carries out the reaction (6R)-5,10-methylene-5,6,7,8-tetrahydrofolate + glycine + H2O = (6S)-5,6,7,8-tetrahydrofolate + L-serine. It functions in the pathway one-carbon metabolism; tetrahydrofolate interconversion. It participates in amino-acid biosynthesis; glycine biosynthesis; glycine from L-serine: step 1/1. Functionally, catalyzes the reversible interconversion of serine and glycine with tetrahydrofolate (THF) serving as the one-carbon carrier. This reaction serves as the major source of one-carbon groups required for the biosynthesis of purines, thymidylate, methionine, and other important biomolecules. Also exhibits THF-independent aldolase activity toward beta-hydroxyamino acids, producing glycine and aldehydes, via a retro-aldol mechanism. In Tolumonas auensis (strain DSM 9187 / NBRC 110442 / TA 4), this protein is Serine hydroxymethyltransferase.